Reading from the N-terminus, the 361-residue chain is Ankyrin repeat domain-containing protein 16 (361 aa).

9 ANK repeats span residues alanine 36–alanine 66, aspartate 70–cysteine 99, alanine 103–leucine 132, aspartate 136–lysine 165, isoleucine 170–tyrosine 200, cysteine 204–alanine 234, leucine 238–valine 268, threonine 273–serine 302, and lysine 306–glutamate 335.

Interacts with AARS; the interaction is direct.

Its subcellular location is the cytoplasm. The protein localises to the nucleus. Its function is as follows. Required to prevent the misactivation of serine (Ser) with tRNA(Ala) by promoting the hydrolysis of Ser-mischarged tRNA(Ala), thereby playing a role in translational fidelity. Binds directly to the catalytic domain of AARS/AlaRS and captures Ser that is misactivated by AARS/AlaRS, preventing the charging of Ser adenylates to tRNA(Ala) and precluding Ser misincorporation in nascent peptides. The polypeptide is Ankyrin repeat domain-containing protein 16 (Homo sapiens (Human)).